A 155-amino-acid chain; its full sequence is MKCPFCGHSSTQVLDSRVSEDGDTVRRRRRCEACDRRFTTYERIELFFPAIVKKNGSRVDYARAKLKDSMRLALRKRPVSAEAIDEAITRIEEKLLALGEKEIPSSQVGELVMRELRKLDKIAYIRFASVYRSFEDVSEFREMLDEFSSSTPRKG.

Residues 3–34 fold into a zinc finger; sequence CPFCGHSSTQVLDSRVSEDGDTVRRRRRCEAC. Residues 49 to 139 form the ATP-cone domain; the sequence is PAIVKKNGSR…VYRSFEDVSE (91 aa).

This sequence belongs to the NrdR family. Requires Zn(2+) as cofactor.

Its function is as follows. Negatively regulates transcription of bacterial ribonucleotide reductase nrd genes and operons by binding to NrdR-boxes. The chain is Transcriptional repressor NrdR from Cupriavidus metallidurans (strain ATCC 43123 / DSM 2839 / NBRC 102507 / CH34) (Ralstonia metallidurans).